We begin with the raw amino-acid sequence, 277 residues long: Zinc finger protein 511 (277 aa).

3 C2H2-type zinc fingers span residues 96–121 (FRCHIAGCKQLFDTLEGYEHHYNALH), 123–146 (NVCSNCKRSFPSNRLLEIHILEWH), and 160–185 (YECLVEGCGLKFKTSKERKDHLIRTH). Residues 225–244 (ESSESMDFSLTPEPVETEPM) are disordered.

It belongs to the krueppel C2H2-type zinc-finger protein family.

The protein localises to the nucleus. Functionally, may be involved in transcriptional regulation. The protein is Zinc finger protein 511 (znf511) of Danio rerio (Zebrafish).